A 212-amino-acid chain; its full sequence is External core antigen (212 aa).

Residues Met1 to Ala19 form the signal peptide. The HBEAG stretch occupies residues Gly25–Leu27. Residues Asn165–Cys212 form a disordered region. Positions Val178–Ser205 are enriched in basic residues. The 1; half-length repeat unit spans residues Ser184–Pro190. Residues Ser184–Gln206 are 3 X 8 AA repeats of S-P-R-R-R-R-S-Q. Positions Ser184–Cys212 are excised as a propeptide. Repeat copies occupy residues Ser191–Gln198 and Ser199–Gln206.

It belongs to the orthohepadnavirus precore antigen family. In terms of assembly, homodimerizes. Post-translationally, phosphorylated. Cleaved by host furin.

It is found in the secreted. The protein resides in the host nucleus. Functionally, may regulate immune response to the intracellular capsid in acting as a T-cell tolerogen, by having an immunoregulatory effect which prevents destruction of infected cells by cytotoxic T-cells. This immune regulation may predispose to chronicity during perinatal infections and prevent severe liver injury during adult infections. The protein is External core antigen of Hepatitis B virus genotype B2 (isolate Indonesia/pIDW420/1988) (HBV-B).